A 422-amino-acid polypeptide reads, in one-letter code: Histidine--tRNA ligase (422 aa).

It belongs to the class-II aminoacyl-tRNA synthetase family. In terms of assembly, homodimer.

It is found in the cytoplasm. It catalyses the reaction tRNA(His) + L-histidine + ATP = L-histidyl-tRNA(His) + AMP + diphosphate + H(+). This is Histidine--tRNA ligase from Mycolicibacterium vanbaalenii (strain DSM 7251 / JCM 13017 / BCRC 16820 / KCTC 9966 / NRRL B-24157 / PYR-1) (Mycobacterium vanbaalenii).